The chain runs to 259 residues: Type III pantothenate kinase (259 aa).

6-13 (DTGNTNTV) serves as a coordination point for ATP. Substrate is bound at residue 107–110 (GPDR). Asp-109 functions as the Proton acceptor in the catalytic mechanism. A K(+)-binding site is contributed by Asp-129. Thr-132 provides a ligand contact to ATP. A substrate-binding site is contributed by Thr-184.

This sequence belongs to the type III pantothenate kinase family. Homodimer. The cofactor is NH4(+). K(+) is required as a cofactor.

Its subcellular location is the cytoplasm. It carries out the reaction (R)-pantothenate + ATP = (R)-4'-phosphopantothenate + ADP + H(+). It functions in the pathway cofactor biosynthesis; coenzyme A biosynthesis; CoA from (R)-pantothenate: step 1/5. In terms of biological role, catalyzes the phosphorylation of pantothenate (Pan), the first step in CoA biosynthesis. In Paracoccus denitrificans (strain Pd 1222), this protein is Type III pantothenate kinase.